A 456-amino-acid chain; its full sequence is MTOR-associated protein MEAK7 (456 aa).

The N-myristoyl glycine moiety is linked to residue Gly2. The TLDc domain occupies 244-412 (SILDVLSVMY…FDKMEVWAVG (169 aa)).

In terms of assembly, interacts (via C-terminal domain) with MTOR and MLST8; the interaction with MTOR increases upon nutrient stimulation.

Its subcellular location is the membrane. The protein resides in the cytoplasm. It localises to the lysosome. In terms of biological role, activates an alternative mTOR signaling through RPS6KB2 activation and EIF4EBP1 repression to regulate cell proliferation and migration. Recruits MTOR at the lysosome, essential for MTOR signaling at the lysosome. The protein is MTOR-associated protein MEAK7 of Homo sapiens (Human).